Reading from the N-terminus, the 163-residue chain is Type-1 angiotensin II receptor-associated protein-like (163 aa).

The Extracellular portion of the chain corresponds to methionine 1–leucine 28. Residues proline 29–glutamine 49 form a helical membrane-spanning segment. Residues arginine 50–alanine 55 lie on the Cytoplasmic side of the membrane. Residues isoleucine 56–leucine 76 traverse the membrane as a helical segment. Residues tyrosine 77–arginine 95 are Extracellular-facing. A helical membrane pass occupies residues phenylalanine 96–tyrosine 116. The Cytoplasmic portion of the chain corresponds to histidine 117–tyrosine 163.

It is found in the membrane. Functionally, appears to be a negative regulator of angiotensin II type I receptor-mediated signaling. The polypeptide is Type-1 angiotensin II receptor-associated protein-like (agtrap) (Xenopus tropicalis (Western clawed frog)).